Consider the following 182-residue polypeptide: Large ribosomal subunit protein uL5 (182 aa).

The protein belongs to the universal ribosomal protein uL5 family. As to quaternary structure, part of the 50S ribosomal subunit; part of the 5S rRNA/L5/L18/L25 subcomplex. Contacts the 5S rRNA and the P site tRNA. Forms a bridge to the 30S subunit in the 70S ribosome.

In terms of biological role, this is one of the proteins that bind and probably mediate the attachment of the 5S RNA into the large ribosomal subunit, where it forms part of the central protuberance. In the 70S ribosome it contacts protein S13 of the 30S subunit (bridge B1b), connecting the 2 subunits; this bridge is implicated in subunit movement. Contacts the P site tRNA; the 5S rRNA and some of its associated proteins might help stabilize positioning of ribosome-bound tRNAs. The chain is Large ribosomal subunit protein uL5 from Borrelia turicatae (strain 91E135).